A 98-amino-acid chain; its full sequence is Integration host factor subunit alpha (98 aa).

The disordered stretch occupies residues F49–P72.

The protein belongs to the bacterial histone-like protein family. As to quaternary structure, heterodimer of an alpha and a beta chain.

This protein is one of the two subunits of integration host factor, a specific DNA-binding protein that functions in genetic recombination as well as in transcriptional and translational control. This is Integration host factor subunit alpha from Shewanella loihica (strain ATCC BAA-1088 / PV-4).